The following is a 221-amino-acid chain: Carotenogenesis protein CarR (221 aa).

The next 6 helical transmembrane spans lie at 56 to 76 (LGLLAAVVLLAVGAVTGPLLL), 79 to 99 (APLLAMLVGTSAVCAWGALSP), 107 to 127 (LGVGLAVVSAAALVLARGAPH), 136 to 156 (VCTVSHLAIGVVPLVVALFAL), 166 to 186 (AVVAGLSVGSTGALLGELACE), and 191 to 211 (HVLSHHLLAWVVITVVLVVIS).

The protein localises to the cell inner membrane. In terms of biological role, negative regulator of the carotenoid synthesis regulon. It is probably inactivated by protoporphyrin IX in the presence of blue light. Inactivation of CarR leads to loss of negative control over the carotenogenesis protein CarQ. In Myxococcus xanthus, this protein is Carotenogenesis protein CarR (carR).